Here is a 63-residue protein sequence, read N- to C-terminus: GKEGYPVDSRGCKVTCFFTGAGYCDKECKLKKASSGYCAWPACYCYGLPDSVPVYDNASNKCB.

Residues 2–63 enclose the LCN-type CS-alpha/beta domain; it reads KEGYPVDSRG…VYDNASNKCB (62 aa). Disulfide bonds link Cys-12–Cys-62, Cys-16–Cys-38, Cys-24–Cys-43, and Cys-28–Cys-45.

It belongs to the long (4 C-C) scorpion toxin superfamily. Sodium channel inhibitor family. Beta subfamily. As to expression, expressed by the venom gland.

The protein localises to the secreted. Its function is as follows. Beta toxins bind voltage-independently at site-4 of sodium channels (Nav) and shift the voltage of activation toward more negative potentials thereby affecting sodium channel activation and promoting spontaneous and repetitive firing. This toxin is only active against insects. This chain is Insect toxin TbIT-1, found in Tityus bahiensis (Brazilian scorpion).